The sequence spans 216 residues: FGFR1 oncogene partner 2 homolog (216 aa).

2 coiled-coil regions span residues 33 to 102 (TTTL…LIMS) and 131 to 185 (SKEL…ITRA). The segment at 193–216 (EDAAESSSHSASSVPNTDLSLRKS) is disordered. Residues 206–216 (VPNTDLSLRKS) show a composition bias toward polar residues.

Belongs to the SIKE family.

The protein localises to the cytoplasm. The protein is FGFR1 oncogene partner 2 homolog (fgfr1op2) of Xenopus tropicalis (Western clawed frog).